Reading from the N-terminus, the 181-residue chain is NADH-quinone oxidoreductase subunit B 2 (181 aa).

[4Fe-4S] cluster-binding residues include C44, C45, C110, and C139.

It belongs to the complex I 20 kDa subunit family. NDH-1 is composed of 14 different subunits. Subunits NuoB, C, D, E, F, and G constitute the peripheral sector of the complex. [4Fe-4S] cluster is required as a cofactor.

It is found in the cell inner membrane. The catalysed reaction is a quinone + NADH + 5 H(+)(in) = a quinol + NAD(+) + 4 H(+)(out). NDH-1 shuttles electrons from NADH, via FMN and iron-sulfur (Fe-S) centers, to quinones in the respiratory chain. The immediate electron acceptor for the enzyme in this species is believed to be a menaquinone. Couples the redox reaction to proton translocation (for every two electrons transferred, four hydrogen ions are translocated across the cytoplasmic membrane), and thus conserves the redox energy in a proton gradient. This Cytophaga hutchinsonii (strain ATCC 33406 / DSM 1761 / CIP 103989 / NBRC 15051 / NCIMB 9469 / D465) protein is NADH-quinone oxidoreductase subunit B 2.